A 92-amino-acid chain; its full sequence is Small ribosomal subunit protein uS19 (92 aa).

This sequence belongs to the universal ribosomal protein uS19 family.

Protein S19 forms a complex with S13 that binds strongly to the 16S ribosomal RNA. The chain is Small ribosomal subunit protein uS19 from Gloeothece citriformis (strain PCC 7424) (Cyanothece sp. (strain PCC 7424)).